The following is a 227-amino-acid chain: Ras-related protein Rab-3C (227 aa).

Ser39, Gly42, Lys43, Thr44, Ser45, Thr56, Ser57, Ser61, and Thr62 together coordinate GTP. Residue Thr44 coordinates Mg(2+). The Switch 1 motif lies at 53 to 66 (DSFTSAFVSTVGID). Thr62 and Asp85 together coordinate Mg(2+). Position 86 is a phosphothreonine (Thr86). The short motif at 86–104 (TAGQERYRTITTAYYRGAM) is the Switch 2 element. 6 residues coordinate GTP: Gly88, Asn143, Lys144, Asp146, Ala174, and Lys175. 2 positions are modified to phosphoserine: Ser196 and Ser198. Residue Thr206 is modified to Phosphothreonine. Residues Cys225 and Cys227 are each lipidated (S-geranylgeranyl cysteine). Cys227 carries the post-translational modification Cysteine methyl ester.

The protein belongs to the small GTPase superfamily. Rab family. As to quaternary structure, interacts with RIMS1, RIMS2, RPH3A and RPH3AL. The GTP-bound form interacts with REP15. Interacts with GDI2, CHM and CHML; phosphorylation at Thr-86 disrupts these interactions. Interacts with MADD (via uDENN domain); the GTP-bound form is preferred for interaction. Requires Mg(2+) as cofactor. Phosphorylation of Thr-86 in the switch II region by LRRK2 prevents the association of RAB regulatory proteins, including CHM, CHML and RAB GDP dissociation inhibitor GDI2.

The protein localises to the cell membrane. The catalysed reaction is GTP + H2O = GDP + phosphate + H(+). With respect to regulation, regulated by guanine nucleotide exchange factors (GEFs) which promote the exchange of bound GDP for free GTP. Regulated by GTPase activating proteins (GAPs) which increase the GTP hydrolysis activity. Inhibited by GDP dissociation inhibitors (GDIs) which prevent Rab-GDP dissociation. Its function is as follows. The small GTPases Rab are key regulators of intracellular membrane trafficking, from the formation of transport vesicles to their fusion with membranes. Rabs cycle between an inactive GDP-bound form and an active GTP-bound form that is able to recruit to membranes different sets of downstream effectors directly responsible for vesicle formation, movement, tethering and fusion. The chain is Ras-related protein Rab-3C (RAB3C) from Bos taurus (Bovine).